A 134-amino-acid chain; its full sequence is Small ribosomal subunit protein uS11 (134 aa).

The protein belongs to the universal ribosomal protein uS11 family. Part of the 30S ribosomal subunit. Interacts with proteins S7 and S18. Binds to IF-3.

Its function is as follows. Located on the platform of the 30S subunit, it bridges several disparate RNA helices of the 16S rRNA. Forms part of the Shine-Dalgarno cleft in the 70S ribosome. The polypeptide is Small ribosomal subunit protein uS11 (Salinibacter ruber (strain DSM 13855 / M31)).